The following is a 217-amino-acid chain: Ribosomal RNA small subunit methyltransferase G (217 aa).

S-adenosyl-L-methionine contacts are provided by residues glycine 79, phenylalanine 84, alanine 130–glutamate 131, and arginine 148.

This sequence belongs to the methyltransferase superfamily. RNA methyltransferase RsmG family.

The protein resides in the cytoplasm. The enzyme catalyses guanosine(527) in 16S rRNA + S-adenosyl-L-methionine = N(7)-methylguanosine(527) in 16S rRNA + S-adenosyl-L-homocysteine. Its function is as follows. Specifically methylates the N7 position of guanine in position 527 of 16S rRNA. In Myxococcus xanthus (strain DK1622), this protein is Ribosomal RNA small subunit methyltransferase G.